A 385-amino-acid polypeptide reads, in one-letter code: DNA replication and repair protein RecF (385 aa).

An ATP-binding site is contributed by 30 to 37 (GRNGQGKT).

It belongs to the RecF family.

It is found in the cytoplasm. Functionally, the RecF protein is involved in DNA metabolism; it is required for DNA replication and normal SOS inducibility. RecF binds preferentially to single-stranded, linear DNA. It also seems to bind ATP. The protein is DNA replication and repair protein RecF of Leifsonia xyli subsp. xyli (strain CTCB07).